A 67-amino-acid polypeptide reads, in one-letter code: Putative ATP synthase subunit epsilon, mitochondrial (67 aa).

The protein belongs to the eukaryotic ATPase epsilon family. In terms of assembly, F-type ATPases have 2 components, CF(1) - the catalytic core - and CF(0) - the membrane proton channel. CF(1) has five subunits: alpha(3), beta(3), gamma(1), delta(1), epsilon(1). CF(0) seems to have nine subunits: a, b, c, d, e, f, g, F6 and 8 (or A6L).

Its subcellular location is the mitochondrion. The protein localises to the mitochondrion inner membrane. Mitochondrial membrane ATP synthase (F(1)F(0) ATP synthase or Complex V) produces ATP from ADP in the presence of a proton gradient across the membrane which is generated by electron transport complexes of the respiratory chain. F-type ATPases consist of two structural domains, F(1) - containing the extramembraneous catalytic core, and F(0) - containing the membrane proton channel, linked together by a central stalk and a peripheral stalk. During catalysis, ATP synthesis in the catalytic domain of F(1) is coupled via a rotary mechanism of the central stalk subunits to proton translocation. Part of the complex F(1) domain and of the central stalk which is part of the complex rotary element. Rotation of the central stalk against the surrounding alpha(3)beta(3) subunits leads to hydrolysis of ATP in three separate catalytic sites on the beta subunits. The chain is Putative ATP synthase subunit epsilon, mitochondrial (atp15) from Schizosaccharomyces pombe (strain 972 / ATCC 24843) (Fission yeast).